Reading from the N-terminus, the 181-residue chain is Protein CRABS CLAW (181 aa).

The segment at 26–53 adopts a C4-type zinc-finger fold; it reads CSICNTILAVGIPLKRMLDTVTVKCGHC. The disordered stretch occupies residues 80–122; that stretch reads GSDYKKGSSSSSSSSTSSDQPPSPSPPFVVKPPEKKQRLPSAY. The span at 87–99 shows a compositional bias: low complexity; that stretch reads SSSSSSSSTSSDQ. Residues 100–109 are compositionally biased toward pro residues; that stretch reads PPSPSPPFVV.

The protein belongs to the YABBY family. In terms of tissue distribution, restricted to flowers, mostly in carpels and nectaries. Expressed at low levels in sepal primordia (buds), sepal receptacle and developing petal. Not detected in placental tissues, septum, stigma and ovules.

The protein resides in the nucleus. Transcription factor required for the initiation of nectary development. Also involved in suppressing early radial growth of the gynoecium, in promoting its later elongation and in fusion of its carpels by regulating both cell division and expansion. Establishes the polar differentiation in the carpels by specifying abaxial cell fate in the ovary wall. Regulates both cell division and expansion. This is Protein CRABS CLAW from Arabidopsis thaliana (Mouse-ear cress).